Reading from the N-terminus, the 380-residue chain is Cytochrome b (380 aa).

Transmembrane regions (helical) follow at residues 33 to 53 (FGSL…FLAM), 77 to 98 (WFIR…YLHI), 113 to 133 (WTIG…GYVL), and 178 to 198 (FFTF…VHLL). Residues H83 and H97 each coordinate heme b. Positions 182 and 196 each coordinate heme b. An a ubiquinone-binding site is contributed by H201. 4 consecutive transmembrane segments (helical) span residues 226–246 (YKDL…ALFS), 288–308 (LGGV…PILH), 320–340 (LTQT…WIGG), and 347–367 (FVII…VLAP).

The protein belongs to the cytochrome b family. As to quaternary structure, the cytochrome bc1 complex contains 3 respiratory subunits (MT-CYB, CYC1 and UQCRFS1), 2 core proteins (UQCRC1 and UQCRC2) and probably 6 low-molecular weight proteins. Heme b is required as a cofactor.

It is found in the mitochondrion inner membrane. In terms of biological role, component of the ubiquinol-cytochrome c reductase complex (complex III or cytochrome b-c1 complex) that is part of the mitochondrial respiratory chain. The b-c1 complex mediates electron transfer from ubiquinol to cytochrome c. Contributes to the generation of a proton gradient across the mitochondrial membrane that is then used for ATP synthesis. The chain is Cytochrome b (mt-cyb) from Lampris guttatus (Opah).